Reading from the N-terminus, the 610-residue chain is UvrABC system protein C (610 aa).

Positions 16–94 (SQPGVYRMYD…IKLYQPRYNV (79 aa)) constitute a GIY-YIG domain. The UVR domain occupies 204-239 (QQVLNQLISRMESASRDLRFEDAARIRDQIQAVRRV).

This sequence belongs to the UvrC family. In terms of assembly, interacts with UvrB in an incision complex.

Its subcellular location is the cytoplasm. Functionally, the UvrABC repair system catalyzes the recognition and processing of DNA lesions. UvrC both incises the 5' and 3' sides of the lesion. The N-terminal half is responsible for the 3' incision and the C-terminal half is responsible for the 5' incision. The sequence is that of UvrABC system protein C from Pectobacterium atrosepticum (strain SCRI 1043 / ATCC BAA-672) (Erwinia carotovora subsp. atroseptica).